The following is a 354-amino-acid chain: MSLFDTINSGGTQLLGVAWPTVWALVRILVVAVVILLCVAYLILWERKLIGWMHVRLGPNRVGPAGLLQPIADVLKLLLKEVIQPAQASRWIYMVAPIMVVVPAFAVWAVIPFQAGAVLGDINAGLLYAMAVSSIGVYGVILAGWASNSKYAFLGAMRAAAQMVSYEISMGFALVVVLMTAGTLNLSGIVGSQEHGFFASHGLNFLSWNWLPLLPMFVVYFISGIAETNRHPFDVVEGESEIVAGHMIDYSGMAFALFFLAEYINMIVISALAATLFLGGWSAPFGFLSFIPGIVWLVAKVFFLLSVFIWARATFPRYRYDQIMRLGWKIFIPVCVVWLVVVGFWIMSPLNIWK.

Helical transmembrane passes span 25 to 45 (LVRI…LILW), 91 to 111 (WIYM…WAVI), 126 to 146 (LLYA…AGWA), 170 to 190 (MGFA…SGIV), 205 to 225 (FLSW…ISGI), 267 to 287 (IVIS…PFGF), 290 to 310 (FIPG…VFIW), and 330 to 350 (IFIP…MSPL).

The protein belongs to the complex I subunit 1 family. NDH-1 is composed of 14 different subunits. Subunits NuoA, H, J, K, L, M, N constitute the membrane sector of the complex.

The protein resides in the cell inner membrane. The catalysed reaction is a quinone + NADH + 5 H(+)(in) = a quinol + NAD(+) + 4 H(+)(out). Its function is as follows. NDH-1 shuttles electrons from NADH, via FMN and iron-sulfur (Fe-S) centers, to quinones in the respiratory chain. The immediate electron acceptor for the enzyme in this species is believed to be ubiquinone. Couples the redox reaction to proton translocation (for every two electrons transferred, four hydrogen ions are translocated across the cytoplasmic membrane), and thus conserves the redox energy in a proton gradient. This subunit may bind ubiquinone. The chain is NADH-quinone oxidoreductase subunit H from Paraburkholderia xenovorans (strain LB400).